Reading from the N-terminus, the 564-residue chain is Urocanate hydratase (564 aa).

NAD(+)-binding positions include 58-59, Q136, 182-184, E202, R207, 248-249, 269-273, 279-280, and Y328; these read GG, GMG, NA, QTSAH, and YL. C416 is an active-site residue. G498 contributes to the NAD(+) binding site.

The protein belongs to the urocanase family. The cofactor is NAD(+).

It is found in the cytoplasm. It carries out the reaction 4-imidazolone-5-propanoate = trans-urocanate + H2O. It functions in the pathway amino-acid degradation; L-histidine degradation into L-glutamate; N-formimidoyl-L-glutamate from L-histidine: step 2/3. Functionally, catalyzes the conversion of urocanate to 4-imidazolone-5-propionate. This Aliivibrio salmonicida (strain LFI1238) (Vibrio salmonicida (strain LFI1238)) protein is Urocanate hydratase.